A 299-amino-acid polypeptide reads, in one-letter code: ATP phosphoribosyltransferase (299 aa).

It belongs to the ATP phosphoribosyltransferase family. Long subfamily. Mg(2+) serves as cofactor.

Its subcellular location is the cytoplasm. The enzyme catalyses 1-(5-phospho-beta-D-ribosyl)-ATP + diphosphate = 5-phospho-alpha-D-ribose 1-diphosphate + ATP. It participates in amino-acid biosynthesis; L-histidine biosynthesis; L-histidine from 5-phospho-alpha-D-ribose 1-diphosphate: step 1/9. With respect to regulation, feedback inhibited by histidine. Catalyzes the condensation of ATP and 5-phosphoribose 1-diphosphate to form N'-(5'-phosphoribosyl)-ATP (PR-ATP). Has a crucial role in the pathway because the rate of histidine biosynthesis seems to be controlled primarily by regulation of HisG enzymatic activity. This chain is ATP phosphoribosyltransferase, found in Shewanella halifaxensis (strain HAW-EB4).